The chain runs to 232 residues: Ornithine carbamoyltransferase (232 aa).

Carbamoyl phosphate is bound by residues Q15, R39, and 66–69 (HPTQ). L-ornithine is bound by residues N99, D163, and 167 to 168 (SM). Carbamoyl phosphate is bound by residues 204–207 (HCLP) and T232.

Belongs to the aspartate/ornithine carbamoyltransferase superfamily. OTCase family.

The protein localises to the cytoplasm. It carries out the reaction carbamoyl phosphate + L-ornithine = L-citrulline + phosphate + H(+). It participates in amino-acid biosynthesis; L-arginine biosynthesis; L-arginine from L-ornithine and carbamoyl phosphate: step 1/3. Its function is as follows. Reversibly catalyzes the transfer of the carbamoyl group from carbamoyl phosphate (CP) to the N(epsilon) atom of ornithine (ORN) to produce L-citrulline. This Neisseria flava protein is Ornithine carbamoyltransferase (argF).